The primary structure comprises 146 residues: Small ribosomal subunit protein uS13 (146 aa).

Residues 119–146 are disordered; it reads ARGKKVRGQRTRSTGRKGRTVGVVRRKR.

Belongs to the universal ribosomal protein uS13 family. As to quaternary structure, part of the 30S ribosomal subunit. Forms a loose heterodimer with protein S19. Forms two bridges to the 50S subunit in the 70S ribosome.

Located at the top of the head of the 30S subunit, it contacts several helices of the 16S rRNA. In the 70S ribosome it contacts the 23S rRNA (bridge B1a) and protein L5 of the 50S subunit (bridge B1b), connecting the 2 subunits; these bridges are implicated in subunit movement. In Archaeoglobus fulgidus (strain ATCC 49558 / DSM 4304 / JCM 9628 / NBRC 100126 / VC-16), this protein is Small ribosomal subunit protein uS13.